Consider the following 429-residue polypeptide: Probable M18 family aminopeptidase 2 (429 aa).

His-82, His-156, and His-401 together coordinate Zn(2+).

The protein belongs to the peptidase M18 family. Zn(2+) is required as a cofactor.

This Pseudomonas syringae pv. tomato (strain ATCC BAA-871 / DC3000) protein is Probable M18 family aminopeptidase 2.